Consider the following 1042-residue polypeptide: Ubiquitin carboxyl-terminal hydrolase 38 (1042 aa).

Residues Thr445–Gln949 form the USP domain. The active-site Nucleophile is the Cys454. His857 (proton acceptor) is an active-site residue.

Belongs to the peptidase C19 family. Interacts with isoform 1 of FBXW7; this interaction prevents FBXW7-mediated degradation of MYC.

The protein resides in the cytoplasm. It is found in the nucleus. It catalyses the reaction Thiol-dependent hydrolysis of ester, thioester, amide, peptide and isopeptide bonds formed by the C-terminal Gly of ubiquitin (a 76-residue protein attached to proteins as an intracellular targeting signal).. In terms of biological role, deubiquitinating enzyme that plays a role in various cellular processes, including DNA repair, cell cycle regulation, and immune response. Plays a role in the inhibition of type I interferon signaling by mediating the 'Lys-33' to 'Lys-48' ubiquitination transition of TBK1 leading to its degradation. Cleaves the ubiquitin chain from the histone demethylase LSD1/KDM1A and prevents it from degradation by the 26S proteasome, thus maintaining LSD1 protein level in cells. Plays a role in the DNA damage response by regulating the deacetylase activity of HDAC1. Mechanistically, removes the 'Lys-63'-linked ubiquitin chain promoting the deacetylase activity of HDAC1 in response to DNA damage. Also acts as a specific deubiquitinase of histone deacetylase 3/HDAC3 and cleaves its 'Lys-63'-linked ubiquitin chains to lower its histone deacetylase activity. Regulates MYC levels and cell proliferation via antagonizing ubiquitin E3 ligase FBXW7 thereby preventing MYC 'Lys-48'-linked ubiquitination and degradation. Participates in antiviral response by removing both 'Lys-48'-linked and 'Lys-63'-linked polyubiquitination of Zika virus envelope protein E. Constitutively associated with IL-33R/IL1RL1, deconjugates its 'Lys-27'-linked polyubiquitination resulting in its autophagic degradation. In Mus musculus (Mouse), this protein is Ubiquitin carboxyl-terminal hydrolase 38 (Usp38).